A 316-amino-acid polypeptide reads, in one-letter code: D-alanine--D-alanine ligase (316 aa).

Residues 104-303 (KRVWLQHGLP…YADLCVAILA (200 aa)) enclose the ATP-grasp domain. Residue 130 to 185 (PDRLGLPLILKPPHEGSTVGITKVAGYSDMKAAYELAARFDAEVLAEQFITGRELT) participates in ATP binding. The Mg(2+) site is built by aspartate 257, glutamate 270, and asparagine 272.

It belongs to the D-alanine--D-alanine ligase family. The cofactor is Mg(2+). Requires Mn(2+) as cofactor.

Its subcellular location is the cytoplasm. The enzyme catalyses 2 D-alanine + ATP = D-alanyl-D-alanine + ADP + phosphate + H(+). The protein operates within cell wall biogenesis; peptidoglycan biosynthesis. Cell wall formation. The sequence is that of D-alanine--D-alanine ligase from Bordetella bronchiseptica (strain ATCC BAA-588 / NCTC 13252 / RB50) (Alcaligenes bronchisepticus).